We begin with the raw amino-acid sequence, 1855 residues long: Unconventional myosin-Va (1855 aa).

An N-acetylalanine modification is found at alanine 2. The Myosin N-terminal SH3-like domain maps to 8-60 (TKFARVWIPDPEEVWKSAELLKDYKPGDKVLLLHLEEGKDLEYHLDPKTKELP). In terms of domain architecture, Myosin motor spans 69 to 763 (VGENDLTALS…QVAYLEKLRA (695 aa)). Position 163–170 (163–170 (GESGAGKT)) interacts with ATP. The disordered stretch occupies residues 598-631 (AISPTSATSSGRTPLTRTPAKPTKGRPGQMAKEH). A Phosphoserine modification is found at serine 600. The segment covering 600 to 613 (SPTSATSSGRTPLT) has biased composition (polar residues). The tract at residues 643–665 (LHLLMETLNATTPHYVRCIKPND) is actin-binding. IQ domains follow at residues 766–788 (LRAA…KYLR), 789–818 (MRKA…TKAA), 814–836 (RTKA…RYKI), 837–861 (RRAA…RKIL), 862–883 (REHK…THYK), and 885–914 (SMHA…EARS). Coiled-coil stretches lie at residues 914-1237 (SVER…APEV) and 1338-1445 (VYEG…ELEV). The residue at position 1032 (threonine 1032) is a Phosphothreonine. 2 positions are modified to phosphoserine: serine 1452 and serine 1652. The Dilute domain maps to 1534–1810 (TSTINSIKKV…IRTIQMRLRD (277 aa)). Threonine 1760 bears the Phosphothreonine mark.

Belongs to the TRAFAC class myosin-kinesin ATPase superfamily. Myosin family. In terms of assembly, may be a homodimer, which associates with multiple calmodulin or myosin light chains. Interacts with RIPL2, the interaction is required for its role in dendrite formation. Interacts with MLPH. Interacts with SYTL4. Interacts with MYRIP. Interacts with RAB10; mediates the transport to the plasma membrane of SLC2A4/GLUT4 storage vesicles. Interacts with FMR1; this interaction occurs in association with polyribosome. In terms of tissue distribution, detected in melanocytes.

It catalyses the reaction ATP + H2O = ADP + phosphate + H(+). Its function is as follows. Processive actin-based motor that can move in large steps approximating the 36-nm pseudo-repeat of the actin filament. Can hydrolyze ATP in the presence of actin, which is essential for its function as a motor protein. Involved in melanosome transport. Also mediates the transport of vesicles to the plasma membrane. May also be required for some polarization process involved in dendrite formation. In Homo sapiens (Human), this protein is Unconventional myosin-Va (MYO5A).